Reading from the N-terminus, the 380-residue chain is Probable transposase for insertion sequence element IS701 (380 aa).

Involved in the transposition of the insertion sequence. This Microchaete diplosiphon (Fremyella diplosiphon) protein is Probable transposase for insertion sequence element IS701.